A 195-amino-acid chain; its full sequence is Transcriptional regulator LdrP (195 aa).

The region spanning 110–182 (GELRARIARY…YRRVYLLDLA (73 aa)) is the HTH crp-type domain. A DNA-binding region (H-T-H motif) is located at residues 142 to 161 (HEEIADATASIRESVSKVLA).

Functionally, activates transcription. Positively regulates PcrtB promoter upstream of the crtB operon in a cAMP-independent manner. Regulated genes include genes encoding DNA photolyase, phytoene synthase and cytochrome P450 monooxygenase, which are involved in carotenoid biosynthesis. Positively regulates the light-inducible gene cluster in the megaplasmid in a cAMP-independent manner. The protein is Transcriptional regulator LdrP of Thermus thermophilus (strain ATCC BAA-163 / DSM 7039 / HB27).